The chain runs to 261 residues: Type III pantothenate kinase (261 aa).

Aspartate 6 to lysine 13 contacts ATP. Position 108-111 (glycine 108–arginine 111) interacts with substrate. Aspartate 110 acts as the Proton acceptor in catalysis. Threonine 134 lines the ATP pocket. Threonine 188 is a binding site for substrate.

Belongs to the type III pantothenate kinase family. Homodimer. The cofactor is NH4(+). It depends on K(+) as a cofactor.

It is found in the cytoplasm. It carries out the reaction (R)-pantothenate + ATP = (R)-4'-phosphopantothenate + ADP + H(+). Its pathway is cofactor biosynthesis; coenzyme A biosynthesis; CoA from (R)-pantothenate: step 1/5. In terms of biological role, catalyzes the phosphorylation of pantothenate (Pan), the first step in CoA biosynthesis. This chain is Type III pantothenate kinase, found in Sphingopyxis alaskensis (strain DSM 13593 / LMG 18877 / RB2256) (Sphingomonas alaskensis).